An 84-amino-acid chain; its full sequence is Putative defensin-like protein 165 (84 aa).

The signal sequence occupies residues 1–27; that stretch reads MSTKLFSYFMLLVVLFSVLTIIPKTEA. Cystine bridges form between C31–C78, C41–C60, C46–C72, and C50–C74.

The protein belongs to the DEFL family.

It is found in the secreted. This is Putative defensin-like protein 165 (LCR12) from Arabidopsis thaliana (Mouse-ear cress).